The following is a 96-amino-acid chain: MQIDNTVLEKLEKLSHLRIDDSKKEEVMGQLSEILGYIDNLNELNTDHLDAAFSTLKGGTPLREDIPRTENNIARDILSRAPESKDDFFIVPAIIE.

It belongs to the GatC family. Heterotrimer of A, B and C subunits.

The enzyme catalyses L-glutamyl-tRNA(Gln) + L-glutamine + ATP + H2O = L-glutaminyl-tRNA(Gln) + L-glutamate + ADP + phosphate + H(+). The catalysed reaction is L-aspartyl-tRNA(Asn) + L-glutamine + ATP + H2O = L-asparaginyl-tRNA(Asn) + L-glutamate + ADP + phosphate + 2 H(+). Allows the formation of correctly charged Asn-tRNA(Asn) or Gln-tRNA(Gln) through the transamidation of misacylated Asp-tRNA(Asn) or Glu-tRNA(Gln) in organisms which lack either or both of asparaginyl-tRNA or glutaminyl-tRNA synthetases. The reaction takes place in the presence of glutamine and ATP through an activated phospho-Asp-tRNA(Asn) or phospho-Glu-tRNA(Gln). In Sulfurovum sp. (strain NBC37-1), this protein is Aspartyl/glutamyl-tRNA(Asn/Gln) amidotransferase subunit C.